We begin with the raw amino-acid sequence, 102 residues long: Amoebiasin-1 (102 aa).

The BC loop motif lies at 27 to 32 (NPTTGY). The short motif at 51 to 61 (DQHAPGICGCG) is the DE loop element. An FG loop motif is present at residues 85–93 (PWAPNANDR).

This sequence belongs to the protease inhibitor I42 family. Monomer. During oxidative conditions, forms homooligomers; disulfide-linked. Interacts with cysteine protease CP2. Interacts with cysteine protease CP5. In terms of processing, during oxidative conditions, cys-39, cys-58 and cys-60 react to form intra- and inter-molecular disulfide bonds resulting in the loss of the protein inhibitory activity.

The protein resides in the cytoplasm. Its function is as follows. Cysteine protease inhibitor. Inhibits cysteine proteases CP1, CP2 and CP5. May protect the cytosol against cysteine proteases released by damaged intracellular vesicles. This chain is Amoebiasin-1, found in Entamoeba histolytica (strain ATCC 30459 / HM-1:IMSS / ABRM).